A 594-amino-acid polypeptide reads, in one-letter code: MPPINTPRRSDSAISVRSLHSESSMSLRSTFSLPEEEEEPEPLVFAEQPSVKLCCQLCCSVFKDPVITTCGHTFCRRCALKSEKCPVDNAKLTVVVNNIAVAEQIGELFIHCRHGCHAAGTGKPGVFEVDPRGCPFTIKLSARKDHESSCDYRPVRCPNNPSCPPLLKMNLEAHLKECEHIKCPHSKYGCTFIGNQDTYETHLETCRFEGLKEFLQQTDDRFHEMHVALAQKDQEIAFLRSMLGKLSEKIDQLEKSLELKFDVLDENQSKLSEDLMEFRRDASMLNDELSHINARLNMGILGSYDPQQIFKCKGTFVGHQGPVWCLCVYSMGDLLFSGSSDKTIKVWDTCTTYKCQKTLEGHDGIVLALCIQGCKLYSGSADCTIIVWDIQNLQKVNTIRAHDNPVCTLVSSHNMLFSGSLKAIKVWDIVGTELKLKKELTGLNHWVRALVAAQSYLYSGSYQTIKIWDIRTLDCIHVLQTSGGSVYSIAVTNHHIVCGTYENLIHVWDIESKEQVRTLTGHVGTVYALAVISTPDQTKVFSASYDRSLRVWSMDNMICTQTLLRHQGSVTALAVSRGRLFSGAVDSTVKVWTC.

Positions 1–33 (MPPINTPRRSDSAISVRSLHSESSMSLRSTFSL) are disordered. A phosphoserine mark is found at serine 12 and serine 15. Low complexity predominate over residues 15-29 (SVRSLHSESSMSLRS). The RING-type zinc-finger motif lies at 55-89 (CQLCCSVFKDPVITTCGHTFCRRCALKSEKCPVDN). Residues 146–216 (HESSCDYRPV…RFEGLKEFLQ (71 aa)) form a TRAF-type zinc finger. WD repeat units lie at residues 318–357 (GHQG…KCQK), 361–398 (GHDG…KVNT), 401–437 (AHDN…LKLK), 439–478 (ELTG…CIHV), 481–518 (TSGG…QVRT), 521–562 (GHVG…CTQT), and 565–593 (RHQG…KVWT).

The protein belongs to the WD repeat TRAF7 family. In terms of assembly, homodimer. Interacts with MAP3K3 and promotes the kinase activity of this enzyme. Post-translationally, phosphorylated by MAP3K3. Ubiquitinates itself upon phosphorylation. Ubiquitously expressed. Expression is relatively high in heart, liver, kidney, testis, prostate, thyroid, and salivary gland.

It is found in the cytoplasmic vesicle. The protein resides in the cytoplasm. The protein localises to the nucleus. It carries out the reaction S-ubiquitinyl-[E2 ubiquitin-conjugating enzyme]-L-cysteine + [acceptor protein]-L-lysine = [E2 ubiquitin-conjugating enzyme]-L-cysteine + N(6)-ubiquitinyl-[acceptor protein]-L-lysine.. It functions in the pathway protein modification; protein ubiquitination. Functionally, E3 ubiquitin and SUMO-protein ligase that plays a role in different biological processes such as innate immunity, inflammation or apoptosis. Potentiates MAP3K3-mediated activation of the NF-kappa-B, JUN/AP1 and DDIT3 transcriptional regulators. Negatively regulates MYB transcriptional activity by sequestering it to the cytosol via SUMOylation. Plays a role in the phosphorylation of MAPK1 and/or MAPK3, probably via its interaction with MAP3K3. Negatively regulates RLR-mediated innate immunity by promoting 'Lys-48'-linked ubiquitination of TBK1 through its RING domain to inhibit the cellular antiviral response. Promotes 'Lys-29'-linked polyubiquitination of NEMO/IKBKG and RELA leading to targeting these two proteins to lysosomal degradative pathways, reducing the transcriptional activity of NF-kappa-B. This chain is E3 ubiquitin-protein ligase TRAF7, found in Mus musculus (Mouse).